The following is a 487-amino-acid chain: Protein NEN2 (487 aa).

The 162-residue stretch at 18–179 (FFDVETTIPF…LDDVRMNFEV (162 aa)) folds into the Exonuclease domain. Residues D20 and E22 each coordinate Mg(2+). H167 acts as the Proton donor/acceptor in catalysis. D172 is a binding site for Mg(2+). 2 disordered regions span residues 200–233 (NSVT…TGEN) and 269–291 (SDVP…GTGD). The span at 221 to 233 (PLQSPTDQQTGEN) shows a compositional bias: polar residues.

Requires Mg(2+) as cofactor. In terms of tissue distribution, expressed in the sieve elements and phloem pole pericycle cells.

The protein localises to the cytoplasm. It localises to the nucleus. Its function is as follows. Probable exonuclease involved in enuclation of sieve elements. This is Protein NEN2 from Arabidopsis thaliana (Mouse-ear cress).